The sequence spans 516 residues: GMP synthase [glutamine-hydrolyzing] (516 aa).

Positions 5 to 199 constitute a Glutamine amidotransferase type-1 domain; the sequence is SIIVLDFGSQ…ARNICGVTEK (195 aa). Residue C82 is the Nucleophile of the active site. Active-site residues include H173 and E175. Residues 200 to 391 enclose the GMPS ATP-PPase domain; that stretch reads WKMEHFLKEQ…LGLPESMINR (192 aa). 227–233 contacts ATP; it reads SGGVDSS.

In terms of assembly, homodimer.

The enzyme catalyses XMP + L-glutamine + ATP + H2O = GMP + L-glutamate + AMP + diphosphate + 2 H(+). Its pathway is purine metabolism; GMP biosynthesis; GMP from XMP (L-Gln route): step 1/1. Catalyzes the synthesis of GMP from XMP. This is GMP synthase [glutamine-hydrolyzing] from Sulfurimonas denitrificans (strain ATCC 33889 / DSM 1251) (Thiomicrospira denitrificans (strain ATCC 33889 / DSM 1251)).